Consider the following 379-residue polypeptide: Chaperone protein DnaJ (379 aa).

In terms of domain architecture, J spans 5–70 (DYYEILGVSK…QKRAAYDQYG (66 aa)). Residues 134-212 (GVTKEIRIPT…CHGHGRVEKS (79 aa)) form a CR-type zinc finger. Zn(2+)-binding residues include C147, C150, C164, C167, C186, C189, C200, and C203. 4 CXXCXGXG motif repeats span residues 147–154 (CDVCHGSG), 164–171 (CPTCHGSG), 186–193 (CPHCQGRG), and 200–207 (CHKCHGHG).

The protein belongs to the DnaJ family. In terms of assembly, homodimer. The cofactor is Zn(2+).

It is found in the cytoplasm. Participates actively in the response to hyperosmotic and heat shock by preventing the aggregation of stress-denatured proteins and by disaggregating proteins, also in an autonomous, DnaK-independent fashion. Unfolded proteins bind initially to DnaJ; upon interaction with the DnaJ-bound protein, DnaK hydrolyzes its bound ATP, resulting in the formation of a stable complex. GrpE releases ADP from DnaK; ATP binding to DnaK triggers the release of the substrate protein, thus completing the reaction cycle. Several rounds of ATP-dependent interactions between DnaJ, DnaK and GrpE are required for fully efficient folding. Also involved, together with DnaK and GrpE, in the DNA replication of plasmids through activation of initiation proteins. In Salmonella agona (strain SL483), this protein is Chaperone protein DnaJ.